Here is a 148-residue protein sequence, read N- to C-terminus: Large-conductance mechanosensitive channel (148 aa).

2 consecutive transmembrane segments (helical) span residues 14-34 (VVDM…INTL) and 85-105 (GIFV…FLSV).

Belongs to the MscL family. Homopentamer.

It is found in the cell inner membrane. Channel that opens in response to stretch forces in the membrane lipid bilayer. May participate in the regulation of osmotic pressure changes within the cell. The sequence is that of Large-conductance mechanosensitive channel from Chlorobium phaeobacteroides (strain DSM 266 / SMG 266 / 2430).